The sequence spans 73 residues: Small ribosomal subunit protein eS27 (73 aa).

Residues Cys-28, Cys-31, Cys-47, and Cys-50 each contribute to the Zn(2+) site. The segment at 28–50 (CVDCGNEQIIFGNASTEVKCHIC) adopts a C4-type zinc-finger fold.

Belongs to the eukaryotic ribosomal protein eS27 family. As to quaternary structure, part of the 30S ribosomal subunit. Zn(2+) is required as a cofactor.

In Methanopyrus kandleri (strain AV19 / DSM 6324 / JCM 9639 / NBRC 100938), this protein is Small ribosomal subunit protein eS27.